The sequence spans 337 residues: Phospholipase A1 1 (337 aa).

An N-terminal signal peptide occupies residues methionine 1–alanine 21. Positions alanine 22–arginine 35 are excised as a propeptide. Cysteine 41 and cysteine 124 are joined by a disulfide. Serine 174 acts as the Nucleophile in catalysis. Catalysis depends on aspartate 202, which acts as the Charge relay system. 2 disulfide bridges follow: cysteine 213-cysteine 218 and cysteine 256-cysteine 261. The active-site Charge relay system is histidine 263. Cystine bridges form between cysteine 278/cysteine 305, cysteine 279/cysteine 330, and cysteine 298/cysteine 303.

Belongs to the AB hydrolase superfamily. Lipase family. As to expression, expressed by the venom gland.

It is found in the secreted. The catalysed reaction is a 1,2-diacyl-sn-glycero-3-phosphocholine + H2O = a 2-acyl-sn-glycero-3-phosphocholine + a fatty acid + H(+). Functionally, catalyzes the hydrolysis of phosphatidylcholine with phospholipase A1 activity. May act as an allergen and induce hemolytic activity. The polypeptide is Phospholipase A1 1 (Polistes dominula (European paper wasp)).